Consider the following 28-residue polypeptide: Venom protein (28 aa).

The disordered stretch occupies residues 1-28 (KEGYPDGQNGKKIPCAINDNISKTXEQA). Over residues 19 to 28 (DNISKTXEQA) the composition is skewed to polar residues.

In terms of tissue distribution, expressed by the venom gland.

The protein localises to the secreted. Causes symptoms of mild intoxication and transient paralysis in insects (A.domestica). In Rhopalurus junceus (Caribbean blue scorpion), this protein is Venom protein.